Reading from the N-terminus, the 182-residue chain is T-cell surface glycoprotein CD3 gamma chain (182 aa).

Residues M1 to A22 form the signal peptide. The Extracellular segment spans residues Q23–S116. Residues Q37–S94 enclose the Ig-like domain. C46 and C87 form a disulfide bridge. N66 is a glycosylation site (N-linked (GlcNAc...) asparagine). A helical transmembrane segment spans residues G117–A137. Residues G138 to K182 are Cytoplasmic-facing. The residue at position 145 (S145) is a Phosphoserine. S148 carries the phosphoserine; by PKC modification. The ITAM domain occupies D149–N177. A Di-leucine motif motif is present at residues L153–L154.

As to quaternary structure, the TCR-CD3 complex is composed of a CD3D/CD3E and a CD3G/CD3E heterodimers that preferentially associate with TCRalpha and TCRbeta, respectively, to form TCRalpha/CD3E/CD3G and TCRbeta/CD3G/CD3E trimers. In turn, the hexamer interacts with CD3Z homodimer to form the TCR-CD3 complex. Alternatively, TCRalpha and TCRbeta can be replaced by TCRgamma and TCRdelta. Post-translationally, phosphorylated on Tyr residues after T-cell receptor triggering by LCK in association with CD4/CD8. Phosphorylated also by PKC; leading to the TCR complex down-regulation. In terms of processing, phosphorylated on Tyr residues after T-cell receptor triggering by LCK in association with CD4/CD8.

It is found in the cell membrane. In terms of biological role, part of the TCR-CD3 complex present on T-lymphocyte cell surface that plays an essential role in adaptive immune response. When antigen presenting cells (APCs) activate T-cell receptor (TCR), TCR-mediated signals are transmitted across the cell membrane by the CD3 chains CD3D, CD3E, CD3G and CD3Z. All CD3 chains contain immunoreceptor tyrosine-based activation motifs (ITAMs) in their cytoplasmic domain. Upon TCR engagement, these motifs become phosphorylated by Src family protein tyrosine kinases LCK and FYN, resulting in the activation of downstream signaling pathways. In addition to this role of signal transduction in T-cell activation, CD3G plays an essential role in the dynamic regulation of TCR expression at the cell surface. Indeed, constitutive TCR cycling is dependent on the di-leucine-based (diL) receptor-sorting motif present in CD3G. This is T-cell surface glycoprotein CD3 gamma chain (Cd3g) from Rattus norvegicus (Rat).